The following is a 203-amino-acid chain: 5-formyltetrahydrofolate cyclo-ligase (203 aa).

N-acetylalanine is present on alanine 2. ATP is bound by residues 10–14 and arginine 14; that span reads KRGLR. Residues leucine 56, glutamate 61, and 148–152 contribute to the substrate site; that span reads RGKGY. 145 to 153 contributes to the ATP binding site; sequence RLGRGKGYY. 2 residues coordinate Mg(2+): aspartate 154 and aspartate 189.

This sequence belongs to the 5-formyltetrahydrofolate cyclo-ligase family. In terms of assembly, monomer. Requires Mg(2+) as cofactor.

Its subcellular location is the cytoplasm. It carries out the reaction (6S)-5-formyl-5,6,7,8-tetrahydrofolate + ATP = (6R)-5,10-methenyltetrahydrofolate + ADP + phosphate. Its function is as follows. Contributes to tetrahydrofolate metabolism. Helps regulate carbon flow through the folate-dependent one-carbon metabolic network that supplies carbon for the biosynthesis of purines, thymidine and amino acids. Catalyzes the irreversible conversion of 5-formyltetrahydrofolate (5-CHO-H(4)PteGlu) to yield 5,10-methenyltetrahydrofolate. The chain is 5-formyltetrahydrofolate cyclo-ligase (Mthfs) from Mus musculus (Mouse).